The chain runs to 477 residues: Ribulose bisphosphate carboxylase large chain (477 aa).

Positions 1 to 2 (MS) are excised as a propeptide. Proline 3 bears the N-acetylproline mark. The residue at position 14 (lysine 14) is an N6,N6,N6-trimethyllysine. The substrate site is built by asparagine 123 and threonine 173. Lysine 175 functions as the Proton acceptor in the catalytic mechanism. Lysine 177 serves as a coordination point for substrate. Mg(2+) contacts are provided by lysine 201, aspartate 203, and glutamate 204. Lysine 201 bears the N6-carboxylysine mark. Histidine 294 (proton acceptor) is an active-site residue. Residues arginine 295, histidine 327, and serine 379 each coordinate substrate.

It belongs to the RuBisCO large chain family. Type I subfamily. In terms of assembly, heterohexadecamer of 8 large chains and 8 small chains; disulfide-linked. The disulfide link is formed within the large subunit homodimers. Mg(2+) serves as cofactor. In terms of processing, the disulfide bond which can form in the large chain dimeric partners within the hexadecamer appears to be associated with oxidative stress and protein turnover.

Its subcellular location is the plastid. The protein localises to the chloroplast. The catalysed reaction is 2 (2R)-3-phosphoglycerate + 2 H(+) = D-ribulose 1,5-bisphosphate + CO2 + H2O. It catalyses the reaction D-ribulose 1,5-bisphosphate + O2 = 2-phosphoglycolate + (2R)-3-phosphoglycerate + 2 H(+). RuBisCO catalyzes two reactions: the carboxylation of D-ribulose 1,5-bisphosphate, the primary event in carbon dioxide fixation, as well as the oxidative fragmentation of the pentose substrate in the photorespiration process. Both reactions occur simultaneously and in competition at the same active site. The polypeptide is Ribulose bisphosphate carboxylase large chain (Oryza nivara (Indian wild rice)).